Here is a 297-residue protein sequence, read N- to C-terminus: MRSPICHLFSAINSSPFKIAPEKEQDLKTIVDDKKIIISVVSEPGFNIRVRKNESNNSHEIVLTVASLEYIWAFSNFFWVFTQEYSKSQKNNDEHFDLTGKNRLKKSDELLKWARKNLQTTGCESWPKKCPKPEAYLQGSEDSQVASEIFLCAIAWILHHEISHVVLQHPLVTTAFSTQEEREADSHATKWILGNLYESAPELKKRALGIATAVLCIQSLEVENYFCLQNTHPAAYERIYSNISCYPVGNEELIEALCTVMLQYLFHGKNINVNLDGESFSSILGDLLCDISRLTSN.

A run of 2 helical transmembrane segments spans residues 61-82 (IVLT…WVFT) and 149-178 (IFLC…AFST).

The protein belongs to the peptidase U49 family.

It is found in the cell membrane. Interacts with a short DNA sequence about one-quarter of the way into the major capsid protein gene 23 of T4; general translation inhibition occurs when this late gene of the virus is expressed. In Escherichia coli (strain K12), this protein is Cell death peptidase (lit).